The following is a 507-amino-acid chain: MLSSLKDFFVLLLPFFIGIAFIYKLWNFTSKKNLPPSPRRLPIIGNLHQLSKFPQRSLRTLSEKYGPVMLLHFGSKPVLVISSAEAAKEVMKINDVSFADRPKWYAAGRVLYEFKDMTFSPYGEYWRQARSICVLQLLSNKRVQSFKGIREEEIRAMLEKINQASNNSSIINGDEIFSTLTNDIIGRSAFGRKFSEEESGSKLRKVLQDLPPLLGSFNVGDFIPWLSWVNYLNGFEKKLNQVSKDCDQYLEQVIDDTRKRDEENGANNNGGNHGNFVSVLLHLQKEDVKGFPSEKGFLKAIILDMIVGGTDTTHLLLHWVITELLKNKHVMTKLQKEVREIVGRKWEITDEDKEKMKYLHAVIKEALRLHPSLPLLVPRVAREDINLMGYRVAKGTEVIINAWAIARDPSYWDEAEEFKPERFLSNNFDFKGLNFEYIPFGSGRRSCPGSSFAIPIVEHTVAHLMHKFNIELPNGVSAEDFDPTDAVGLVSHDQNPLSFVATPVTIF.

Residues 8–28 traverse the membrane as a helical segment; sequence FFVLLLPFFIGIAFIYKLWNF. Asn167 carries N-linked (GlcNAc...) asparagine glycosylation. Residue Cys447 participates in heme binding.

It belongs to the cytochrome P450 family. The cofactor is heme. In terms of tissue distribution, confined to roots.

It is found in the endoplasmic reticulum membrane. It catalyses the reaction (-)-tabersonine + reduced [NADPH--hemoprotein reductase] + O2 = (-)-(R)-19-hydroxytabersonine + oxidized [NADPH--hemoprotein reductase] + H2O + H(+). It carries out the reaction lochnericine + reduced [NADPH--hemoprotein reductase] + O2 = horhammericine + oxidized [NADPH--hemoprotein reductase] + H2O + H(+). The catalysed reaction is (-)-vincadifformine + reduced [NADPH--hemoprotein reductase] + O2 = (-)-minovincinine + oxidized [NADPH--hemoprotein reductase] + H2O + H(+). Its pathway is alkaloid biosynthesis. Functionally, component of the monoterpenoid indole alkaloids (MIAs, e.g. echitovenine, tabersonine, lochnericine, 19-hydroxytabersonine and horhammericine) biosynthetic pathway; MIAs are used in cancer treatment and other medical applications. Cytochrome P450 catalyzing the conversion of (-)-tabersonine to 19-hydroxytabersonine, of lochnericine to horhammericine and of (-)-vincadifformine to (-)-minovincinine. The sequence is that of Tabersonine/lochnericine 19-hydroxylase from Catharanthus roseus (Madagascar periwinkle).